The sequence spans 282 residues: BTB/POZ domain-containing protein At3g56230 (282 aa).

Residues 40 to 50 show a composition bias toward basic and acidic residues; the sequence is GSKEDRHDKSN. The interval 40–66 is disordered; the sequence is GSKEDRHDKSNHNSTINNGSSISSSPL. Over residues 51-64 the composition is skewed to low complexity; that stretch reads HNSTINNGSSISSS. Residues 111–181 form the BTB domain; the sequence is ADILLKPGDD…LYTGTLASDK (71 aa).

The protein operates within protein modification; protein ubiquitination. Its function is as follows. May act as a substrate-specific adapter of an E3 ubiquitin-protein ligase complex (CUL3-RBX1-BTB) which mediates the ubiquitination and subsequent proteasomal degradation of target proteins. This chain is BTB/POZ domain-containing protein At3g56230, found in Arabidopsis thaliana (Mouse-ear cress).